Here is a 342-residue protein sequence, read N- to C-terminus: tRNA N6-adenosine threonylcarbamoyltransferase (342 aa).

The Fe cation site is built by histidine 114 and histidine 118. Residues 136 to 140 (LVSGG), aspartate 169, glycine 182, aspartate 186, and asparagine 275 contribute to the substrate site. Aspartate 301 contributes to the Fe cation binding site.

The protein belongs to the KAE1 / TsaD family. The cofactor is Fe(2+).

It localises to the cytoplasm. The catalysed reaction is L-threonylcarbamoyladenylate + adenosine(37) in tRNA = N(6)-L-threonylcarbamoyladenosine(37) in tRNA + AMP + H(+). Its function is as follows. Required for the formation of a threonylcarbamoyl group on adenosine at position 37 (t(6)A37) in tRNAs that read codons beginning with adenine. Is involved in the transfer of the threonylcarbamoyl moiety of threonylcarbamoyl-AMP (TC-AMP) to the N6 group of A37, together with TsaE and TsaB. TsaD likely plays a direct catalytic role in this reaction. This chain is tRNA N6-adenosine threonylcarbamoyltransferase, found in Streptococcus pyogenes serotype M18 (strain MGAS8232).